Consider the following 137-residue polypeptide: Large-conductance mechanosensitive channel (137 aa).

The next 2 helical transmembrane spans lie at 10–30 (FAMRGNVVDLAVGVIIGAAFG) and 76–96 (GVFIQNVFDFIIVAFAIFMAI).

This sequence belongs to the MscL family. Homopentamer.

Its subcellular location is the cell inner membrane. Its function is as follows. Channel that opens in response to stretch forces in the membrane lipid bilayer. May participate in the regulation of osmotic pressure changes within the cell. The protein is Large-conductance mechanosensitive channel of Klebsiella pneumoniae subsp. pneumoniae (strain ATCC 700721 / MGH 78578).